A 175-amino-acid polypeptide reads, in one-letter code: MYTMQSWSCIFLIICSMQSVCHCCDWIRHHYGHLSAEYLSLLDQMGGDITKQNAPVLFPTSLYRHIDDAEFEDKVIFLKETIYQITKLFDGNMKSVTWDKKNLDDFLNILERQLENLNSCVSPAMKPERRLKRYFKKLNSKVLRKMNYSAQAWELIRKEIKRHLQRLDILAAQMY.

Positions 1–23 (MYTMQSWSCIFLIICSMQSVCHC) are cleaved as a signal peptide. C24 and C120 form a disulfide bridge.

The protein belongs to the alpha/beta interferon family. As to expression, isoform 1 and isoform 2 are expressed in several tissues, including gill, spleen, intestine, kidney and skin.

The protein localises to the secreted. It localises to the cytoplasm. It is found in the cytosol. Key player in antiviral response. Induces expression of TLRs, including that of TLR3, TLR9 and TLR8a1, and that of cytosolic pattern recognition receptors, including RIGI, IFIH1/MDA5 and DHX58/LGP2. Also induces MX1 and its own expression. In the presence of intracellular IFNAR2 (iIFNAR2) and IFNAR1B, intracellular isoform 3 may mediate STAT1 and STAT2 phosphorylation and induction of EIF2AK2, MX1 and RSAD2. This is Interferon a3 from Oncorhynchus mykiss (Rainbow trout).